The sequence spans 347 residues: UPF0284 protein LS215_0030 (347 aa).

It belongs to the UPF0284 family.

The protein is UPF0284 protein LS215_0030 of Saccharolobus islandicus (strain L.S.2.15 / Lassen #1) (Sulfolobus islandicus).